We begin with the raw amino-acid sequence, 267 residues long: Deoxyribose-phosphate aldolase (267 aa).

Aspartate 123 functions as the Proton donor/acceptor in the catalytic mechanism. Lysine 185 acts as the Schiff-base intermediate with acetaldehyde in catalysis. Lysine 217 acts as the Proton donor/acceptor in catalysis.

This sequence belongs to the DeoC/FbaB aldolase family. DeoC type 1 subfamily.

The protein localises to the cytoplasm. It catalyses the reaction 2-deoxy-D-ribose 5-phosphate = D-glyceraldehyde 3-phosphate + acetaldehyde. It participates in carbohydrate degradation; 2-deoxy-D-ribose 1-phosphate degradation; D-glyceraldehyde 3-phosphate and acetaldehyde from 2-deoxy-alpha-D-ribose 1-phosphate: step 2/2. Functionally, catalyzes a reversible aldol reaction between acetaldehyde and D-glyceraldehyde 3-phosphate to generate 2-deoxy-D-ribose 5-phosphate. This chain is Deoxyribose-phosphate aldolase, found in Coccidioides immitis (strain RS) (Valley fever fungus).